Here is a 4678-residue protein sequence, read N- to C-terminus: E3 ubiquitin-protein ligase MYCBP2 (4678 aa).

Disordered regions lie at residues aspartate 87 to serine 127, serine 172 to proline 192, and alanine 609 to lysine 628. The span at serine 100–arginine 124 shows a compositional bias: basic residues. A phosphoserine mark is found at serine 127, serine 178, serine 181, and serine 183. 5 RCC1 repeats span residues aspartate 600–lysine 655, asparagine 699–proline 755, lysine 907–glutamate 957, asparagine 958–methionine 1008, and glycine 1010–aspartate 1066. The segment covering arginine 898 to lysine 910 has biased composition (basic residues). The segment at arginine 898–threonine 928 is disordered. Over residues histidine 911–serine 924 the composition is skewed to basic and acidic residues. A PHR domain 1 region spans residues asparagine 1235–leucine 1386. Phosphoserine is present on serine 1624. The tract at residues asparagine 1726–arginine 1884 is PHR domain 2. The cysteines at positions 1748 and 1863 are disulfide-linked. Disordered stretches follow at residues phenylalanine 1993 to serine 2012 and glutamine 2321 to alanine 2340. The span at asparagine 1994–serine 2012 shows a compositional bias: polar residues. The segment at valine 2022 to valine 2550 is RAE1 binding. A Filamin repeat occupies serine 2341 to lysine 2443. Threonine 2683 is modified (phosphothreonine). Disordered regions lie at residues leucine 2709–glutamate 2931, threonine 2943–glycine 2963, glutamate 2979–lysine 3020, and alanine 3066–leucine 3085. Residues asparagine 2718–glutamate 2733 show a composition bias toward polar residues. Residues leucine 2742–glycine 2760 are compositionally biased toward basic and acidic residues. Residue serine 2769 is modified to Phosphoserine. The segment covering aspartate 2775 to serine 2785 has biased composition (basic and acidic residues). Residues arginine 2786–alanine 2810 are compositionally biased toward polar residues. Serine 2787, serine 2789, serine 2833, serine 2839, serine 2869, serine 2871, and serine 2920 each carry phosphoserine. Residues proline 2828–serine 2843 show a composition bias toward low complexity. Basic and acidic residues predominate over residues threonine 2860–serine 2871. At serine 2985 the chain carries Phosphoserine. A compositionally biased stretch (basic residues) spans isoleucine 2988 to lysine 3001. Phosphoserine is present on residues serine 3090, serine 3478, and serine 3505. The segment at proline 3605–valine 3631 is disordered. The segment covering asparagine 3616–valine 3631 has biased composition (basic and acidic residues). Residues serine 3719–glutamate 3897 enclose the DOC domain. The interval serine 3915 to glutamate 3934 is disordered. Residue threonine 3921 is modified to Phosphothreonine. 2 positions are modified to phosphoserine: serine 3931 and serine 3932. 10 residues coordinate Zn(2+): cysteine 4428, cysteine 4431, cysteine 4446, histidine 4448, histidine 4451, cysteine 4454, cysteine 4475, cysteine 4478, cysteine 4544, and cysteine 4547. The RING-type; atypical zinc finger occupies cysteine 4428 to lysine 4479. Residues tyrosine 4539–histidine 4676 are tandem cysteine domain. Cysteine 4558 is a catalytic residue. Zn(2+) contacts are provided by cysteine 4575, cysteine 4578, cysteine 4587, histidine 4590, cysteine 4599, cysteine 4602, and cysteine 4603. Residue cysteine 4610 is part of the active site. 7 residues coordinate Zn(2+): cysteine 4617, cysteine 4620, cysteine 4638, cysteine 4652, histidine 4658, cysteine 4669, and cysteine 4672.

It belongs to the RING-Cys relay (RCR) family. Interacts with MYC. Interacts with TSC2 (tuberin) when TSC2 is in complex with TSC1 (hamartin). Interacts with FBXO45. Interacts with RAE1. Interacts with CPNE1 (via VWFA domain) and CPNE4 (via VWFA domain). Interacts with (sumoylated) RANGAP1; interaction with sumoylated RANGAP1 inhibits E3 ubiquitin-protein ligase activity and promotes MYCBP2 translocation to the nucleus. Interacts with RAN. Interacts with ATP13A2; the interaction inhibits the ubiquitination of TSC2 by MYCBP2. Interacts with USP11. Autoubiquitinated. In terms of tissue distribution, expressed in all tissues examined, expression is exceptionally abundant in brain and thymus. Colocalizes with TSC1 and TSC2 along the neurites and in the growth cones. Highly expressed in peripheral and central neurons. Colocalized with TSC1 in one of the filopodial extensions at the tip of a growth cone.

The protein localises to the nucleus. Its subcellular location is the cell projection. It is found in the axon. It localises to the cytoplasm. The protein resides in the cytoskeleton. It carries out the reaction [E2 ubiquitin-conjugating enzyme]-S-ubiquitinyl-L-cysteine + [acceptor protein]-L-threonine = [E2 ubiquitin-conjugating enzyme]-L-cysteine + [acceptor protein]-3-O-ubiquitinyl-L-threonine.. It participates in protein modification; protein ubiquitination. Its function is as follows. Atypical E3 ubiquitin-protein ligase which specifically mediates ubiquitination of threonine and serine residues on target proteins, instead of ubiquitinating lysine residues. Shows esterification activity towards both threonine and serine, with a preference for threonine, and acts via two essential catalytic cysteine residues that relay ubiquitin to its substrate via thioester intermediates. Interacts with the E2 enzymes UBE2D1, UBE2D3, UBE2E1 and UBE2L3. Plays a key role in neural development, probably by mediating ubiquitination of threonine residues on target proteins. Involved in different processes such as regulation of neurite outgrowth, synaptic growth, synaptogenesis and axon degeneration. Required for the formation of major central nervous system axon tracts. Required for proper axon growth by regulating axon navigation and axon branching: acts by regulating the subcellular location and stability of MAP3K12/DLK. Required for proper localization of retinogeniculate projections but not for eye-specific segregation. Regulates axon guidance in the olfactory system. Involved in Wallerian axon degeneration, an evolutionarily conserved process that drives the loss of damaged axons: acts by promoting destabilization of NMNAT2, probably via ubiquitination of NMNAT2. Catalyzes ubiquitination of threonine and/or serine residues on NMNAT2, consequences of threonine and/or serine ubiquitination are however unknown. Regulates the internalization of TRPV1 in peripheral sensory neurons. Mediates ubiquitination and subsequent proteasomal degradation of TSC2/tuberin. Independently of the E3 ubiquitin-protein ligase activity, also acts as a guanosine exchange factor (GEF) for RAN in neurons of dorsal root ganglia. May function as a facilitator or regulator of transcriptional activation by MYC. Acts in concert with HUWE1 to regulate the circadian clock gene expression by promoting the lithium-induced ubiquination and degradation of NR1D1. This Homo sapiens (Human) protein is E3 ubiquitin-protein ligase MYCBP2.